Here is a 161-residue protein sequence, read N- to C-terminus: Large ribosomal subunit protein uL30m (161 aa).

The N-terminal 34 residues, 1-34 (MAGILRLVVQRPPGGLQTVTKGVESLIGTDWIRH), are a transit peptide targeting the mitochondrion.

It belongs to the universal ribosomal protein uL30 family. As to quaternary structure, component of the mitochondrial ribosome large subunit (39S) which comprises a 16S rRNA and about 50 distinct proteins.

Its subcellular location is the mitochondrion. In Macaca fascicularis (Crab-eating macaque), this protein is Large ribosomal subunit protein uL30m (MRPL30).